Reading from the N-terminus, the 64-residue chain is Large ribosomal subunit protein bL35 (64 aa).

Belongs to the bacterial ribosomal protein bL35 family.

The chain is Large ribosomal subunit protein bL35 from Desulforudis audaxviator (strain MP104C).